Reading from the N-terminus, the 125-residue chain is Large ribosomal subunit protein bL12 (125 aa).

It belongs to the bacterial ribosomal protein bL12 family. In terms of assembly, homodimer. Part of the ribosomal stalk of the 50S ribosomal subunit. Forms a multimeric L10(L12)X complex, where L10 forms an elongated spine to which 2 to 4 L12 dimers bind in a sequential fashion. Binds GTP-bound translation factors.

Functionally, forms part of the ribosomal stalk which helps the ribosome interact with GTP-bound translation factors. Is thus essential for accurate translation. In Chlorobium limicola (strain DSM 245 / NBRC 103803 / 6330), this protein is Large ribosomal subunit protein bL12.